The sequence spans 347 residues: NADH-ubiquinone oxidoreductase chain 2 (347 aa).

The next 10 helical transmembrane spans lie at 3 to 23 (PIILMFIMLTIFMGTMLTMIS), 25 to 45 (HWLLMWVGLEINMLAIIPILM), 59 to 79 (YFLTQATASMLLMFSIVINTA), 96 to 116 (LVTMAALMMKLGMTPFHFWVP), 127 to 147 (GMLLLTWQKLAPISILLQIFP), 150 to 170 (NPNIILLIAILSILVGGWGGL), 193 to 213 (ILMYWPSLTMLNLLIYLMLTI), 240 to 260 (ITLTILISLLSLGGLPPLTGF), 274 to 294 (SNIMLATIMAIMALLNLYFYM), and 323 to 343 (IFLLSPLVILATLTLPLSPAL).

It belongs to the complex I subunit 2 family. As to quaternary structure, core subunit of respiratory chain NADH dehydrogenase (Complex I) which is composed of 45 different subunits. Interacts with TMEM242.

It localises to the mitochondrion inner membrane. The catalysed reaction is a ubiquinone + NADH + 5 H(+)(in) = a ubiquinol + NAD(+) + 4 H(+)(out). Core subunit of the mitochondrial membrane respiratory chain NADH dehydrogenase (Complex I) which catalyzes electron transfer from NADH through the respiratory chain, using ubiquinone as an electron acceptor. Essential for the catalytic activity and assembly of complex I. In Lemur catta (Ring-tailed lemur), this protein is NADH-ubiquinone oxidoreductase chain 2.